The primary structure comprises 335 residues: Glyceraldehyde-3-phosphate dehydrogenase (335 aa).

Residues 11–12 (TI) and glycine 110 each bind NAD(+). Residue 139 to 141 (SCN) participates in D-glyceraldehyde 3-phosphate binding. Cysteine 140 (nucleophile) is an active-site residue. Arginine 168 serves as a coordination point for NAD(+). 194-195 (HG) contributes to the D-glyceraldehyde 3-phosphate binding site. Residue glutamine 301 coordinates NAD(+).

The protein belongs to the glyceraldehyde-3-phosphate dehydrogenase family. As to quaternary structure, homotetramer.

The protein resides in the cytoplasm. It catalyses the reaction D-glyceraldehyde 3-phosphate + phosphate + NADP(+) = (2R)-3-phospho-glyceroyl phosphate + NADPH + H(+). It carries out the reaction D-glyceraldehyde 3-phosphate + phosphate + NAD(+) = (2R)-3-phospho-glyceroyl phosphate + NADH + H(+). It participates in carbohydrate degradation; glycolysis; pyruvate from D-glyceraldehyde 3-phosphate: step 1/5. The chain is Glyceraldehyde-3-phosphate dehydrogenase from Halobacterium salinarum (strain ATCC 29341 / DSM 671 / R1).